Reading from the N-terminus, the 284-residue chain is uncharacterized protein (284 aa).

Residues 1–23 (MKRGCAIAVMICGLITSVSAASA) form the signal peptide.

It belongs to the surface antigen msp4 family.

This is an uncharacterized protein from Brucella abortus (strain 2308).